A 215-amino-acid chain; its full sequence is Large ribosomal subunit protein eL14 (215 aa).

The residue at position 79 (lysine 79) is an N6-acetyllysine. Lysine 85 is subject to N6-acetyllysine; alternate. Residue lysine 85 is modified to N6-succinyllysine; alternate. A Glycyl lysine isopeptide (Lys-Gly) (interchain with G-Cter in SUMO2) cross-link involves residue lysine 124. The residue at position 139 (serine 139) is a Phosphoserine. Positions 161 to 215 are disordered; the sequence is VPAKKITAASKKAPAQKVPAQKATGQKAAPAPKAQKGQKAPAQKAPAPKASGKKA. A run of 6 repeats spans residues 171–175, 176–180, 181–185, 186–190, 193–195, and 196–198. Residues 171 to 190 form a 4 X 5 AA tandem repeats of Q-K-A-[PAS]-X region; sequence KKAPAQKVPAQKATGQKAAP. A 2 X 3 AA tandem repeats of K-[GA]-Q region spans residues 193-198; sequence KAQKGQ. Lysine 204 carries the post-translational modification N6-succinyllysine.

Belongs to the eukaryotic ribosomal protein eL14 family. In terms of assembly, component of the large ribosomal subunit.

It is found in the cytoplasm. Component of the large ribosomal subunit. The ribosome is a large ribonucleoprotein complex responsible for the synthesis of proteins in the cell. In Homo sapiens (Human), this protein is Large ribosomal subunit protein eL14 (RPL14).